The sequence spans 346 residues: Methylthioribose-1-phosphate isomerase (346 aa).

Residues 48 to 50 (RGA), Arg-91, and Gln-196 each bind substrate. Catalysis depends on Asp-237, which acts as the Proton donor. A substrate-binding site is contributed by 247–248 (NK).

The protein belongs to the eIF-2B alpha/beta/delta subunits family. MtnA subfamily.

The catalysed reaction is 5-(methylsulfanyl)-alpha-D-ribose 1-phosphate = 5-(methylsulfanyl)-D-ribulose 1-phosphate. It functions in the pathway amino-acid biosynthesis; L-methionine biosynthesis via salvage pathway; L-methionine from S-methyl-5-thio-alpha-D-ribose 1-phosphate: step 1/6. Its function is as follows. Catalyzes the interconversion of methylthioribose-1-phosphate (MTR-1-P) into methylthioribulose-1-phosphate (MTRu-1-P). The chain is Methylthioribose-1-phosphate isomerase from Thermosipho melanesiensis (strain DSM 12029 / CIP 104789 / BI429).